The sequence spans 287 residues: 3-alpha-hydroxysteroid sulfotransferase (287 aa).

44–49 (KSGTNW) contributes to the 3'-phosphoadenylyl sulfate binding site. Substrate contacts are provided by Trp72 and Trp77. His99 acts as the Proton acceptor in catalysis. Residues Arg121, Ser129, Tyr184, 218-223 (SSFQFM), and 247-249 (RKG) contribute to the 3'-phosphoadenylyl sulfate site.

The protein belongs to the sulfotransferase 1 family. Homodimer. In terms of tissue distribution, adrenal gland and liver.

The protein localises to the cytoplasm. The enzyme catalyses an alcohol + 3'-phosphoadenylyl sulfate = an alkyl sulfate + adenosine 3',5'-bisphosphate + H(+). Functionally, sulfotransferase that utilizes 3'-phospho-5'-adenylyl sulfate (PAPS) as sulfonate donor to catalyze the sulfonation of 3-alpha-hydroxyl groups of neutral steroids. The sequence is that of 3-alpha-hydroxysteroid sulfotransferase (STD1) from Cavia porcellus (Guinea pig).